Reading from the N-terminus, the 219-residue chain is Protein-L-isoaspartate O-methyltransferase (219 aa).

The active site involves Ser-65.

It belongs to the methyltransferase superfamily. L-isoaspartyl/D-aspartyl protein methyltransferase family. Monomer.

It localises to the cytoplasm. It catalyses the reaction [protein]-L-isoaspartate + S-adenosyl-L-methionine = [protein]-L-isoaspartate alpha-methyl ester + S-adenosyl-L-homocysteine. In terms of biological role, catalyzes the methyl esterification of L-isoaspartyl residues in peptides and proteins that result from spontaneous decomposition of normal L-aspartyl and L-asparaginyl residues. It plays a role in the repair and/or degradation of damaged proteins. This Pyrococcus furiosus (strain ATCC 43587 / DSM 3638 / JCM 8422 / Vc1) protein is Protein-L-isoaspartate O-methyltransferase (pcm).